We begin with the raw amino-acid sequence, 164 residues long: Phosphopantetheine adenylyltransferase (164 aa).

Serine 9 lines the substrate pocket. ATP-binding positions include 9-10 (SF) and histidine 17. Residues lysine 41, threonine 74, and arginine 88 each contribute to the substrate site. Residues 89–91 (GVR), glutamate 99, and 124–130 (NSFVASS) contribute to the ATP site.

The protein belongs to the bacterial CoaD family. As to quaternary structure, homohexamer. It depends on Mg(2+) as a cofactor.

Its subcellular location is the cytoplasm. It carries out the reaction (R)-4'-phosphopantetheine + ATP + H(+) = 3'-dephospho-CoA + diphosphate. It functions in the pathway cofactor biosynthesis; coenzyme A biosynthesis; CoA from (R)-pantothenate: step 4/5. In terms of biological role, reversibly transfers an adenylyl group from ATP to 4'-phosphopantetheine, yielding dephospho-CoA (dPCoA) and pyrophosphate. The protein is Phosphopantetheine adenylyltransferase of Lactobacillus helveticus (strain DPC 4571).